The following is a 531-amino-acid chain: GPI alpha-1,2-mannosyltransferase 3 (531 aa).

Residue N84 is glycosylated (N-linked (GlcNAc...) asparagine). 3 helical membrane passes run 99–119 (GLRG…LYLL), 124–144 (VWFL…IADV), and 174–196 (YCAT…LYYY). N204 carries an N-linked (GlcNAc...) asparagine glycan. The next 6 membrane-spanning stretches (helical) occupy residues 210–230 (LICV…WIPL), 249–269 (YLPI…IFFG), 303–323 (GVPV…MVTP), 328–348 (ILLV…HKEF), 350–370 (FIYP…SNLK), and 375–395 (AAVG…GLIH). Residues N414 and N476 are each glycosylated (N-linked (GlcNAc...) asparagine).

This sequence belongs to the glycosyltransferase 22 family. PIGB subfamily.

The protein localises to the endoplasmic reticulum membrane. The protein operates within glycolipid biosynthesis; glycosylphosphatidylinositol-anchor biosynthesis. Alpha-1,2-mannosyltransferase that catalyzes the transfer of the third mannose, via an alpha-1,2 bond, from a dolichol-phosphate-mannose (Dol-P-Man) to an alpha-D-Man-(1-&gt;6)-2-PEtn-alpha-D-Man-(1-&gt;4)-alpha-D-GlcN-(1-&gt;6)-(1-radyl,2-acyl-sn-glycero-3-phospho)-2-acyl-inositol intermediate to generate an alpha-D-Man-(1-&gt;2)-alpha-D-Man-(1-&gt;6)-2-PEtn-alpha-D-Man-(1-&gt;4)-alpha-D-GlcN-(1-&gt;6)-(1-radyl,2-acyl-sn-glycero-3-phospho)-2-acyl-inositol (also termed H6) and participates in the nineth step of the glycosylphosphatidylinositol-anchor biosynthesis. May also add the third mannose to an alpha-D-Man-(1-&gt;6)-alpha-D-Man-(1-&gt;4)-alpha-D-GlcN-(1-&gt;6)-(1-radyl,2-acyl-sn-glycero-3-phospho)-2-acyl-inositol (also termed H3) intermediate generating an alpha-D-Man-(1-&gt;2)-alpha-D-Man-(1-&gt;6)-alpha-D-Man-(1-&gt;4)-alpha-D-GlcN-(1-&gt;6)-(1-radyl,2-acyl-sn-glycero-3-phospho)-2-acyl-inositol (also termed H4). This chain is GPI alpha-1,2-mannosyltransferase 3, found in Xenopus laevis (African clawed frog).